Consider the following 718-residue polypeptide: Heat shock 70 kDa protein 6, chloroplastic (718 aa).

Residues 1–92 constitute a chloroplast transit peptide; the sequence is MASSAAQIHV…IDLGTTNSAV (92 aa). The interval 671–718 is disordered; sequence QSLYNQPGAGGPGAGPSPGGEGASSGDSSSSKGGDGDDVIDADFTDSQ. Gly residues predominate over residues 678–693; the sequence is GAGGPGAGPSPGGEGA. Residues 706 to 718 show a composition bias toward acidic residues; sequence GDDVIDADFTDSQ.

This sequence belongs to the heat shock protein 70 (TC 1.A.33) family. DnaK subfamily. Interacts with geminivirus movement protein (MP).

Its subcellular location is the plastid. It localises to the chloroplast stroma. Functionally, acts redundantly with HSP70-7 in the thermotolerance of germinating seeds. Plays an important role in the protein precursor import into chloroplasts. Its function is as follows. In cooperation with other chaperones, Hsp70s are key components that facilitate folding of de novo synthesized proteins, assist translocation of precursor proteins into organelles, and are responsible for degradation of damaged protein under stress conditions. The chain is Heat shock 70 kDa protein 6, chloroplastic (HSP70-6) from Arabidopsis thaliana (Mouse-ear cress).